Reading from the N-terminus, the 304-residue chain is Protein pxr1 (304 aa).

Positions 1–11 are enriched in basic residues; that stretch reads MGLAAPRKKTK. Disordered regions lie at residues 1–25, 144–238, and 256–276; these read MGLA…SRST, NATA…DTET, and TSLL…MGRR. A compositionally biased stretch (polar residues) spans 15–25; the sequence is DPNNTSWSRST. Residues 25–79 form the G-patch domain; that stretch reads TDGFGHRILKAQGWTPGDFLGARNATHSDLFTTASASHIRVVLKDDTLGLGARPK. Basic and acidic residues-rich tracts occupy residues 154-170 and 204-238; these read LRVD…HENG and GKEM…DTET. Residues 256–266 are compositionally biased toward polar residues; sequence TSLLASNGPST.

Belongs to the PINX1 family.

Its subcellular location is the nucleus. The protein resides in the nucleolus. Functionally, involved in rRNA-processing at A0, A1 and A2 sites and negatively regulates telomerase. This Aspergillus fumigatus (strain ATCC MYA-4609 / CBS 101355 / FGSC A1100 / Af293) (Neosartorya fumigata) protein is Protein pxr1 (pxr1).